An 855-amino-acid polypeptide reads, in one-letter code: Lon protease (855 aa).

In terms of domain architecture, Lon N-terminal spans 45-288; that stretch reads IYLLTVKNVV…ETFRFLNIEY (244 aa). 439-446 serves as a coordination point for ATP; sequence GPPGVGKT. Residues 674–855 enclose the Lon proteolytic domain; that stretch reads IQVPGVVTGL…NEVIDLSIIK (182 aa). Active-site residues include Ser-761 and Lys-804.

Belongs to the peptidase S16 family. In terms of assembly, homohexamer. Organized in a ring with a central cavity.

The protein resides in the cytoplasm. The catalysed reaction is Hydrolysis of proteins in presence of ATP.. Its function is as follows. ATP-dependent serine protease that mediates the selective degradation of mutant and abnormal proteins as well as certain short-lived regulatory proteins. Required for cellular homeostasis and for survival from DNA damage and developmental changes induced by stress. Degrades polypeptides processively to yield small peptide fragments that are 5 to 10 amino acids long. Binds to DNA in a double-stranded, site-specific manner. The protein is Lon protease of Karelsulcia muelleri (strain GWSS) (Sulcia muelleri).